A 122-amino-acid chain; its full sequence is Small ribosomal subunit protein uS13 (122 aa).

A disordered region spans residues 95–122; that stretch reads GLPVRGQRTHTNARTRKGPAKPIAGKKK.

It belongs to the universal ribosomal protein uS13 family. As to quaternary structure, part of the 30S ribosomal subunit. Forms a loose heterodimer with protein S19. Forms two bridges to the 50S subunit in the 70S ribosome.

Functionally, located at the top of the head of the 30S subunit, it contacts several helices of the 16S rRNA. In the 70S ribosome it contacts the 23S rRNA (bridge B1a) and protein L5 of the 50S subunit (bridge B1b), connecting the 2 subunits; these bridges are implicated in subunit movement. Contacts the tRNAs in the A and P-sites. In Caulobacter vibrioides (strain ATCC 19089 / CIP 103742 / CB 15) (Caulobacter crescentus), this protein is Small ribosomal subunit protein uS13.